The sequence spans 204 residues: Ribonuclease HII (204 aa).

Residues 16 to 204 (ESIAGCDEVG…RRSFLKKILK (189 aa)) form the RNase H type-2 domain. A divalent metal cation is bound by residues D22, E23, and D120.

Belongs to the RNase HII family. It depends on Mn(2+) as a cofactor. Mg(2+) serves as cofactor.

The protein localises to the cytoplasm. It catalyses the reaction Endonucleolytic cleavage to 5'-phosphomonoester.. Its function is as follows. Endonuclease that specifically degrades the RNA of RNA-DNA hybrids. The chain is Ribonuclease HII from Alkaliphilus metalliredigens (strain QYMF).